A 449-amino-acid polypeptide reads, in one-letter code: Omega-amino acid--pyruvate aminotransferase (449 aa).

Substrate is bound at residue W60. 119–120 provides a ligand contact to pyridoxal 5'-phosphate; sequence GS. K288 is modified (N6-(pyridoxal phosphate)lysine). T327 serves as a coordination point for pyridoxal 5'-phosphate. Substrate contacts are provided by R414 and Q421.

Belongs to the class-III pyridoxal-phosphate-dependent aminotransferase family. In terms of assembly, homotetramer. It depends on pyridoxal 5'-phosphate as a cofactor.

It carries out the reaction 3-oxopropanoate + L-alanine = beta-alanine + pyruvate. In terms of biological role, catalyzes transamination between a variety of omega-amino acids, mono and diamines, and pyruvate. Plays a pivotal role in the metabolism of the omega amino acids. The sequence is that of Omega-amino acid--pyruvate aminotransferase from Pseudomonas putida (Arthrobacter siderocapsulatus).